Here is a 339-residue protein sequence, read N- to C-terminus: Silicatein (339 aa).

The signal sequence occupies residues 1 to 18 (MAIVYGAILFQIILIACA). A propeptide spanning residues 19-122 (EFPPEWHAWK…REYQAPATVS (104 aa)) is cleaved from the precursor. The residue at position 123 (Leu123) is a N,N-dimethylleucine; alternate. N-methylleucine; alternate is present on Leu123. Ser188 bears the Phosphoserine mark. A Phosphotyrosine modification is found at Tyr219. Active-site residues include His286 and Asn306. At Ser335 the chain carries Phosphoserine.

The protein belongs to the peptidase C1 family. As to quaternary structure, homodimer. Homodimerization occurs as a result of non-covalent interactions and not through disulfide linkages between the two monomers.

In terms of biological role, polymerizes silica around the axial filament during spicule formation. The polypeptide is Silicatein (Petrosia ficiformis (Common Mediterranean sponge)).